The chain runs to 274 residues: Thymidylate synthase (274 aa).

Arg-21 serves as a coordination point for dUMP. His-51 lines the (6R)-5,10-methylene-5,6,7,8-tetrahydrofolate pocket. Position 123–124 (123–124 (RR)) interacts with dUMP. Catalysis depends on Cys-156, which acts as the Nucleophile. Residues 176–179 (RSAD), Asn-187, and 217–219 (HIY) contribute to the dUMP site. Residue Asp-179 participates in (6R)-5,10-methylene-5,6,7,8-tetrahydrofolate binding. Position 273 (Ser-273) interacts with (6R)-5,10-methylene-5,6,7,8-tetrahydrofolate.

This sequence belongs to the thymidylate synthase family. Bacterial-type ThyA subfamily. In terms of assembly, homodimer.

Its subcellular location is the cytoplasm. It catalyses the reaction dUMP + (6R)-5,10-methylene-5,6,7,8-tetrahydrofolate = 7,8-dihydrofolate + dTMP. The protein operates within pyrimidine metabolism; dTTP biosynthesis. Catalyzes the reductive methylation of 2'-deoxyuridine-5'-monophosphate (dUMP) to 2'-deoxythymidine-5'-monophosphate (dTMP) while utilizing 5,10-methylenetetrahydrofolate (mTHF) as the methyl donor and reductant in the reaction, yielding dihydrofolate (DHF) as a by-product. This enzymatic reaction provides an intracellular de novo source of dTMP, an essential precursor for DNA biosynthesis. This is Thymidylate synthase from Francisella tularensis subsp. tularensis (strain SCHU S4 / Schu 4).